The chain runs to 589 residues: Phenylalanine--tRNA ligase beta subunit (589 aa).

The region spanning leucine 302–methionine 379 is the B5 domain. 4 residues coordinate Mg(2+): aspartate 357, aspartate 363, glutamate 366, and aspartate 367.

It belongs to the phenylalanyl-tRNA synthetase beta subunit family. Type 2 subfamily. As to quaternary structure, heterotetramer; dimer of two heterodimers formed by FARSA and FARSB. It depends on Mg(2+) as a cofactor.

The protein localises to the cytoplasm. The enzyme catalyses tRNA(Phe) + L-phenylalanine + ATP = L-phenylalanyl-tRNA(Phe) + AMP + diphosphate + H(+). The protein is Phenylalanine--tRNA ligase beta subunit (Farsb) of Mus musculus (Mouse).